Consider the following 451-residue polypeptide: Protein FAM117A (451 aa).

Gly residues predominate over residues 1–25 (MSGAAAGGRGGGSWGPGRGGAGGLR). 2 disordered regions span residues 1–83 (MSGA…RPQP) and 164–183 (RTKL…VQGD). S29 and S67 each carry phosphoserine. The stretch at 149-175 (TDHRKEITKLKQQLQRTKLSRSGKEKE) forms a coiled coil. A phosphoserine mark is found at S193 and S213. The disordered stretch occupies residues 242 to 293 (DGHRAPAPPQNSSCDHSLLLEPGNLTSSPSVPLASPQPPSQASREEHQGATE). Residues S318 and S326 each carry the phosphoserine modification. T353 bears the Phosphothreonine mark. The interval 403–451 (SPGSPLPTASPRAPRKGPEASKASSLPSEPWQRSPPSEESVLFQSSLVV) is disordered. Residues S412 and S426 each carry the phosphoserine modification. A compositionally biased stretch (polar residues) spans 436–451 (SPPSEESVLFQSSLVV).

Belongs to the FAM117 family.

This is Protein FAM117A (Fam117a) from Mus musculus (Mouse).